Here is a 424-residue protein sequence, read N- to C-terminus: 26S proteasome regulatory subunit 4 homolog (424 aa).

Over residues 1–11 (MSRDKSERDNL) the composition is skewed to basic and acidic residues. Positions 1 to 33 (MSRDKSERDNLQDTTTINLRRRRRVKEGKAASK) are disordered. Residue 210 to 217 (GLPGTGKT) coordinates ATP.

It belongs to the AAA ATPase family. The 26S proteasome consists of a 20S proteasome core and two 19S regulatory subunits. The 20S proteasome core is composed of 28 subunits that are arranged in four stacked rings, resulting in a barrel-shaped structure. The two end rings are each formed by seven alpha subunits, and the two central rings are each formed by seven beta subunits. The catalytic chamber with the active sites is on the inside of the barrel.

It localises to the cytoplasm. It is found in the nucleus. Acts as a regulatory subunit of the 26S proteasome which degrades poly-ubiquitinated proteins in the cytoplasm and in the nucleus. It is essential for the regulated turnover of proteins and for the removal of misfolded proteins. The proteasome is a multicatalytic proteinase complex that is characterized by its ability to cleave peptides with Arg, Phe, Tyr, Leu, and Glu adjacent to the leaving group at neutral or slightly basic pH. The protein is 26S proteasome regulatory subunit 4 homolog (RPT2) of Encephalitozoon cuniculi (strain GB-M1) (Microsporidian parasite).